The chain runs to 661 residues: Zeaxanthin epoxidase, chloroplastic (661 aa).

The transit peptide at Met1–Ser50 directs the protein to the chloroplast. Residues Arg82–Glu110 and Ile360–Asp373 contribute to the FAD site. The region spanning Cys558–Ile607 is the FHA domain.

FAD serves as cofactor.

The protein localises to the plastid. Its subcellular location is the chloroplast. The catalysed reaction is all-trans-zeaxanthin + 4 reduced [2Fe-2S]-[ferredoxin] + 2 O2 + 4 H(+) = all-trans-violaxanthin + 4 oxidized [2Fe-2S]-[ferredoxin] + 2 H2O. It participates in plant hormone biosynthesis; abscisate biosynthesis. Converts zeaxanthin into antheraxanthin and subsequently violaxanthin. Involved in the epoxidation of zeaxanthin. The protein is Zeaxanthin epoxidase, chloroplastic of Prunus armeniaca (Apricot).